A 235-amino-acid polypeptide reads, in one-letter code: Thymidylate kinase (235 aa).

10–17 (GINGVEKS) is a binding site for ATP.

It belongs to the thymidylate kinase family.

It catalyses the reaction dTMP + ATP = dTDP + ADP. The protein operates within pyrimidine metabolism; dTTP biosynthesis. Functionally, catalyzes the conversion of dTMP to dTDP. The polypeptide is Thymidylate kinase (TMK) (African swine fever virus (isolate Pig/Kenya/KEN-50/1950) (ASFV)).